Consider the following 204-residue polypeptide: Ribosome maturation factor RimP (204 aa).

The interval 177-204 (NFDESQFDEIQETEGEEADEAETPITRH) is disordered. Over residues 181-198 (SQFDEIQETEGEEADEAE) the composition is skewed to acidic residues.

This sequence belongs to the RimP family.

It localises to the cytoplasm. Functionally, required for maturation of 30S ribosomal subunits. The polypeptide is Ribosome maturation factor RimP (Cereibacter sphaeroides (strain ATCC 17025 / ATH 2.4.3) (Rhodobacter sphaeroides)).